A 119-amino-acid polypeptide reads, in one-letter code: Small ribosomal subunit protein uS10 (119 aa).

An N-acetylalanine modification is found at Ala2. Lys4 participates in a covalent cross-link: Glycyl lysine isopeptide (Lys-Gly) (interchain with G-Cter in ubiquitin). Lys8 is subject to N6-succinyllysine; alternate. Lys8 is covalently cross-linked (Glycyl lysine isopeptide (Lys-Gly) (interchain with G-Cter in ubiquitin); alternate). Phosphothreonine is present on Thr9. Residues Lys34 and Lys75 each carry the N6-acetyllysine modification. Ser93 carries the post-translational modification Phosphoserine.

Belongs to the universal ribosomal protein uS10 family. In terms of assembly, component of the 40S small ribosomal subunit. Polyubiquitinated by ZNF598 via 'Lys-63'-linked ubiquitin chains when a ribosome has stalled, initiating the ribosome quality control (RQC) pathway to degrade the potentially detrimental aberrant nascent polypeptide. Deubiquitinated by OTUD3 and USP21, antagonizing ZNF598 activity. Post-translationally, ufmylated by UFL1.

Its subcellular location is the cytoplasm. Component of the small ribosomal subunit. The ribosome is a large ribonucleoprotein complex responsible for the synthesis of proteins in the cell. The chain is Small ribosomal subunit protein uS10 (Rps20) from Rattus norvegicus (Rat).